Here is a 296-residue protein sequence, read N- to C-terminus: Uridine phosphorylase A (296 aa).

Phosphate-binding positions include Gly46, Arg77, and 121–124 (RLGT). Uridine contacts are provided by residues 125 to 126 (SG) and 201 to 203 (QGR).

This sequence belongs to the PNP/UDP phosphorylase family. In terms of assembly, homodimer.

The enzyme catalyses uridine + phosphate = alpha-D-ribose 1-phosphate + uracil. It functions in the pathway pyrimidine metabolism; UMP biosynthesis via salvage pathway; uracil from uridine (phosphorylase route): step 1/1. Functionally, catalyzes the reversible phosphorylytic cleavage of uridine and deoxyuridine to uracil and ribose- or deoxyribose-1-phosphate. The produced molecules are then utilized as carbon and energy sources or in the rescue of pyrimidine bases for nucleotide synthesis. In Schistosoma mansoni (Blood fluke), this protein is Uridine phosphorylase A.